Reading from the N-terminus, the 497-residue chain is Lysine--tRNA ligase (497 aa).

Residues Glu409 and Glu416 each contribute to the Mg(2+) site.

Belongs to the class-II aminoacyl-tRNA synthetase family. As to quaternary structure, homodimer. Requires Mg(2+) as cofactor.

The protein localises to the cytoplasm. The enzyme catalyses tRNA(Lys) + L-lysine + ATP = L-lysyl-tRNA(Lys) + AMP + diphosphate. In Streptococcus pyogenes serotype M6 (strain ATCC BAA-946 / MGAS10394), this protein is Lysine--tRNA ligase.